Reading from the N-terminus, the 79-residue chain is Small ribosomal subunit protein bS16 (79 aa).

Belongs to the bacterial ribosomal protein bS16 family.

This chain is Small ribosomal subunit protein bS16, found in Hahella chejuensis (strain KCTC 2396).